Reading from the N-terminus, the 247-residue chain is MSATSTIDPAEVAKFEAMAAEWWNPHGKFKPLHQMNPCRLDYITEQIAAEFDRDLSAPLPFQGLRLLDIGCGGGLLSEPMARLGADVVGADAAPRNIPVARLHAEQSGLTIDYRNTTAEDLAAAGERFDVVLNMEVVEHVADPLAYLTACRELLKPGGLMVCSTLNRNPKSFAMAIVGAEWIMRWLPKGTHDWSKFITPDELYDLIRKAGLDPVDRKGMVFNPVSWSWSLSDRDLSVNYVTASVRPR.

Positions 39, 70, 91, and 134 each coordinate S-adenosyl-L-methionine.

This sequence belongs to the methyltransferase superfamily. UbiG/COQ3 family.

The enzyme catalyses a 3-demethylubiquinol + S-adenosyl-L-methionine = a ubiquinol + S-adenosyl-L-homocysteine + H(+). The catalysed reaction is a 3-(all-trans-polyprenyl)benzene-1,2-diol + S-adenosyl-L-methionine = a 2-methoxy-6-(all-trans-polyprenyl)phenol + S-adenosyl-L-homocysteine + H(+). It participates in cofactor biosynthesis; ubiquinone biosynthesis. In terms of biological role, O-methyltransferase that catalyzes the 2 O-methylation steps in the ubiquinone biosynthetic pathway. The chain is Ubiquinone biosynthesis O-methyltransferase from Cereibacter sphaeroides (strain ATCC 17025 / ATH 2.4.3) (Rhodobacter sphaeroides).